We begin with the raw amino-acid sequence, 604 residues long: Hemagglutinin glycoprotein (604 aa).

The Intravirion segment spans residues 1–37 (MLPYQDKVGAFYKDNARANSTKLSLVTEGHGGRRPPY). The chain crosses the membrane as a helical span at residues 38-58 (LLFVLLILLVGILALLAITGV). Residues 59 to 604 (RFHQVSTSNM…LVRIRFSCNR (546 aa)) are Virion surface-facing. Asn149, Asn422, and Asn587 each carry an N-linked (GlcNAc...) asparagine; by host glycan.

This sequence belongs to the paramyxoviruses hemagglutinin-neuraminidase family. Non-sialidase subfamily. As to quaternary structure, binds canine SLAMF1 at the cell surface.

The protein localises to the virion membrane. It localises to the host cell membrane. Functionally, attaches the virus to cell receptors and thereby initiating infection. Binding of H protein to the receptor induces a conformational change that allows the F protein to trigger virion/cell membranes fusion. The cellular receptor might be SLAM, and may explain the lymphotropism of the virus. The protein is Hemagglutinin glycoprotein (H) of Ailuropoda melanoleuca (Giant panda).